The following is a 177-amino-acid chain: ATP synthase subunit delta (177 aa).

The protein belongs to the ATPase delta chain family. As to quaternary structure, F-type ATPases have 2 components, F(1) - the catalytic core - and F(0) - the membrane proton channel. F(1) has five subunits: alpha(3), beta(3), gamma(1), delta(1), epsilon(1). F(0) has three main subunits: a(1), b(2) and c(10-14). The alpha and beta chains form an alternating ring which encloses part of the gamma chain. F(1) is attached to F(0) by a central stalk formed by the gamma and epsilon chains, while a peripheral stalk is formed by the delta and b chains.

The protein resides in the cell inner membrane. Functionally, f(1)F(0) ATP synthase produces ATP from ADP in the presence of a proton or sodium gradient. F-type ATPases consist of two structural domains, F(1) containing the extramembraneous catalytic core and F(0) containing the membrane proton channel, linked together by a central stalk and a peripheral stalk. During catalysis, ATP synthesis in the catalytic domain of F(1) is coupled via a rotary mechanism of the central stalk subunits to proton translocation. This protein is part of the stalk that links CF(0) to CF(1). It either transmits conformational changes from CF(0) to CF(1) or is implicated in proton conduction. The polypeptide is ATP synthase subunit delta (Pectobacterium atrosepticum (strain SCRI 1043 / ATCC BAA-672) (Erwinia carotovora subsp. atroseptica)).